The primary structure comprises 432 residues: 3-phosphoshikimate 1-carboxyvinyltransferase (432 aa).

Positions 22, 23, and 27 each coordinate 3-phosphoshikimate. Phosphoenolpyruvate is bound at residue Lys-22. Phosphoenolpyruvate-binding residues include Gly-96 and Arg-127. 3-phosphoshikimate-binding residues include Ser-173, Ser-174, Gln-175, Ser-201, Asp-316, Asn-339, and Lys-343. Position 175 (Gln-175) interacts with phosphoenolpyruvate. The active-site Proton acceptor is the Asp-316. Positions 347, 391, and 416 each coordinate phosphoenolpyruvate.

This sequence belongs to the EPSP synthase family. Monomer.

It localises to the cytoplasm. It catalyses the reaction 3-phosphoshikimate + phosphoenolpyruvate = 5-O-(1-carboxyvinyl)-3-phosphoshikimate + phosphate. The protein operates within metabolic intermediate biosynthesis; chorismate biosynthesis; chorismate from D-erythrose 4-phosphate and phosphoenolpyruvate: step 6/7. Functionally, catalyzes the transfer of the enolpyruvyl moiety of phosphoenolpyruvate (PEP) to the 5-hydroxyl of shikimate-3-phosphate (S3P) to produce enolpyruvyl shikimate-3-phosphate and inorganic phosphate. This Actinobacillus pleuropneumoniae serotype 5b (strain L20) protein is 3-phosphoshikimate 1-carboxyvinyltransferase.